The chain runs to 238 residues: Ribosomal RNA small subunit methyltransferase E 1 (238 aa).

Belongs to the RNA methyltransferase RsmE family.

It is found in the cytoplasm. It carries out the reaction uridine(1498) in 16S rRNA + S-adenosyl-L-methionine = N(3)-methyluridine(1498) in 16S rRNA + S-adenosyl-L-homocysteine + H(+). Specifically methylates the N3 position of the uracil ring of uridine 1498 (m3U1498) in 16S rRNA. Acts on the fully assembled 30S ribosomal subunit. The polypeptide is Ribosomal RNA small subunit methyltransferase E 1 (rsmE1) (Borreliella burgdorferi (strain ATCC 35210 / DSM 4680 / CIP 102532 / B31) (Borrelia burgdorferi)).